A 232-amino-acid polypeptide reads, in one-letter code: Ribose-5-phosphate isomerase A (232 aa).

Substrate contacts are provided by residues 28–31 (TGST), 83–86 (DGAD), and 96–99 (KGGG). E105 (proton acceptor) is an active-site residue. K123 serves as a coordination point for substrate.

It belongs to the ribose 5-phosphate isomerase family. As to quaternary structure, homodimer.

It catalyses the reaction aldehydo-D-ribose 5-phosphate = D-ribulose 5-phosphate. The protein operates within carbohydrate degradation; pentose phosphate pathway; D-ribose 5-phosphate from D-ribulose 5-phosphate (non-oxidative stage): step 1/1. Functionally, catalyzes the reversible conversion of ribose-5-phosphate to ribulose 5-phosphate. The chain is Ribose-5-phosphate isomerase A from Rhodopseudomonas palustris (strain ATCC BAA-98 / CGA009).